The following is a 95-amino-acid chain: Antitoxin TacA1 (95 aa).

Residues 59–95 form a neutralization domain region; it reads FNFNDEQYEEFINLLDAPVADDPVIEKLLARKPQWDV.

Belongs to the TacA antitoxin family. As to quaternary structure, homodimer. Forms a complex with cognate toxin TacT1. Forms a 4:2 antitoxin:toxin complex with cognate toxin TacT1.

Its function is as follows. Antitoxin component of a type II toxin-antitoxin (TA) system. Counteracts the toxic effect of cognate toxin TacT1 (T8), but not TacT2 or TacT3. Plays a role in persister cell formation. In terms of biological role, the TacA1-TacT1 complex binds (and probably represses) its own promoter DNA but not that of tacA3-tacT3, it does not repress the tacA3-tacT3 promoter. The protein is Antitoxin TacA1 of Salmonella typhimurium (strain 14028s / SGSC 2262).